The sequence spans 362 residues: Chorismate synthase (362 aa).

R47 contacts NADP(+). FMN contacts are provided by residues 124 to 126 (RAS), G286, 301 to 305 (KPTAT), and R327.

It belongs to the chorismate synthase family. Homotetramer. FMNH2 serves as cofactor.

The enzyme catalyses 5-O-(1-carboxyvinyl)-3-phosphoshikimate = chorismate + phosphate. The protein operates within metabolic intermediate biosynthesis; chorismate biosynthesis; chorismate from D-erythrose 4-phosphate and phosphoenolpyruvate: step 7/7. Its function is as follows. Catalyzes the anti-1,4-elimination of the C-3 phosphate and the C-6 proR hydrogen from 5-enolpyruvylshikimate-3-phosphate (EPSP) to yield chorismate, which is the branch point compound that serves as the starting substrate for the three terminal pathways of aromatic amino acid biosynthesis. This reaction introduces a second double bond into the aromatic ring system. In Prochlorococcus marinus (strain MIT 9303), this protein is Chorismate synthase.